The chain runs to 317 residues: 3-oxoacyl-[acyl-carrier-protein] reductase 5, chloroplastic (317 aa).

A chloroplast-targeting transit peptide spans 1–57 (TTVAATKLTSLKATAGKLGYREICQVRQWAPLKSAMPHFGMLRCATSTVVKAQAQAQ). 79 to 103 (VTGASRGIGKAIALSLGKAGCKVLV) contacts NADP(+). S211 is a substrate binding site. Catalysis depends on Y224, which acts as the Proton acceptor.

The protein belongs to the short-chain dehydrogenases/reductases (SDR) family. In terms of assembly, homotetramer.

It localises to the plastid. Its subcellular location is the chloroplast. The enzyme catalyses a (3R)-hydroxyacyl-[ACP] + NADP(+) = a 3-oxoacyl-[ACP] + NADPH + H(+). Its pathway is lipid metabolism; fatty acid biosynthesis. This Brassica napus (Rape) protein is 3-oxoacyl-[acyl-carrier-protein] reductase 5, chloroplastic (bkr1).